We begin with the raw amino-acid sequence, 122 residues long: uncharacterized protein (122 aa).

2 consecutive transmembrane segments (helical) span residues 43–63 (PIII…IFFI) and 76–96 (AVAD…ILYF).

The protein resides in the membrane. This is an uncharacterized protein from Schizosaccharomyces pombe (strain 972 / ATCC 24843) (Fission yeast).